A 789-amino-acid polypeptide reads, in one-letter code: Spermatogenesis-associated protein 20 (789 aa).

Positions 1–19 (MSHHSPPPPKHKGEHKGHG) are enriched in basic residues. The tract at residues 1–65 (MSHHSPPPPK…CPPPAPQKTA (65 aa)) is disordered. Ser5 and Ser652 each carry phosphoserine.

As to expression, testis-specific and age-dependent (at protein level). Highly expressed. Expressed in round spermatids located in the inner half-layer of the seminiferous epithelium as well as in early elongated spermatids having cytoplasmic protrusions into the tubular lumen.

The protein resides in the secreted. In terms of biological role, may play a role in fertility regulation. The sequence is that of Spermatogenesis-associated protein 20 (Spata20) from Rattus norvegicus (Rat).